We begin with the raw amino-acid sequence, 157 residues long: Cyclic pyranopterin monophosphate synthase (157 aa).

Residues 74–76 and 112–113 contribute to the substrate site; these read MCH and ME. The active site involves aspartate 127.

Belongs to the MoaC family. Homohexamer; trimer of dimers.

It catalyses the reaction (8S)-3',8-cyclo-7,8-dihydroguanosine 5'-triphosphate = cyclic pyranopterin phosphate + diphosphate. It functions in the pathway cofactor biosynthesis; molybdopterin biosynthesis. In terms of biological role, catalyzes the conversion of (8S)-3',8-cyclo-7,8-dihydroguanosine 5'-triphosphate to cyclic pyranopterin monophosphate (cPMP). The protein is Cyclic pyranopterin monophosphate synthase of Campylobacter lari (strain RM2100 / D67 / ATCC BAA-1060).